Reading from the N-terminus, the 500-residue chain is Lariat debranching enzyme (500 aa).

The disordered stretch occupies residues 1 to 25 (MSSKNPVDEQPCCGSHEGSHQDPAP). Residues Cys-48, His-50, Asp-79, and Asn-124 each coordinate a divalent metal cation. Residues 164–194 (SGIFSQGDFQFSHYERPSFSERDVKSAYHVR) are lariat recognition loop. His-222, His-274, and His-276 together coordinate a divalent metal cation. Residues 453–500 (DDANAKPNQDDVDFGDEDFVIDRGHTSDEPEAKKSRLDEDKFEAVPSE) are disordered. Acidic residues predominate over residues 462–471 (DDVDFGDEDF). The segment covering 472–500 (VIDRGHTSDEPEAKKSRLDEDKFEAVPSE) has biased composition (basic and acidic residues).

Belongs to the lariat debranching enzyme family. Requires Fe(2+) as cofactor. The cofactor is Zn(2+). It depends on Mn(2+) as a cofactor.

It localises to the nucleus. Its activity is regulated as follows. Active in presence of diverse metals including Fe(2+), Zn(2+), Mn(2+). Binds two metal cations in two adjacent alpha and beta metal-binding pockets. In terms of biological role, cleaves the 2'-5' phosphodiester linkage at the branch point of lariat intron pre-mRNAs after splicing and converts them into linear molecules that are subsequently degraded. It thereby facilitates ribonucleotide turnover. The sequence is that of Lariat debranching enzyme from Caenorhabditis elegans.